The following is a 25-amino-acid chain: Glucomannokinase (25 aa).

This sequence belongs to the ROK (NagC/XylR) family. As to quaternary structure, homodimer.

The enzyme catalyses D-glucose + ATP = D-glucose 6-phosphate + ADP + H(+). The catalysed reaction is D-mannose + ATP = D-mannose 6-phosphate + ADP + H(+). It functions in the pathway carbohydrate degradation; glycolysis; D-glyceraldehyde 3-phosphate and glycerone phosphate from D-glucose: step 1/4. The protein operates within carbohydrate metabolism; mannose metabolism. With respect to regulation, competitively inhibited by 2-deoxy-glucose. Its function is as follows. The enzyme has great affinity for glucose and mannose. This chain is Glucomannokinase, found in Segatella bryantii (Prevotella bryantii).